A 1072-amino-acid polypeptide reads, in one-letter code: Carbamoyl phosphate synthase large chain (1072 aa).

The carboxyphosphate synthetic domain stretch occupies residues 1 to 401 (MPKRLDINTI…SLLKAVRSLE (401 aa)). ATP-binding residues include Arg129, Arg169, Gly175, Gly176, Lys208, Ile210, Glu215, Gly241, Val242, His243, Gln284, and Glu298. An ATP-grasp 1 domain is found at 133 to 327 (RTLMQELNEP…IAKLAAKIAV (195 aa)). 3 residues coordinate Mg(2+): Gln284, Glu298, and Asn300. Residues Gln284, Glu298, and Asn300 each contribute to the Mn(2+) site. Residues 402–546 (LGIYHLELNH…YSTYGDENES (145 aa)) form an oligomerization domain region. Residues 547–929 (IVTERKSVMV…ALYKGLVAAG (383 aa)) form a carbamoyl phosphate synthetic domain region. In terms of domain architecture, ATP-grasp 2 spans 671–861 (EAALTELGIP…MANIATKVIL (191 aa)). Arg707, Arg746, Glu752, Gly777, Val778, His779, Ser780, Gln820, and Glu832 together coordinate ATP. Residues Gln820, Glu832, and Asn834 each contribute to the Mg(2+) site. The Mn(2+) site is built by Gln820, Glu832, and Asn834. One can recognise an MGS-like domain in the interval 930–1072 (ISIPTHGSVI…PTTRHEVVHA (143 aa)). Positions 930 to 1072 (ISIPTHGSVI…PTTRHEVVHA (143 aa)) are allosteric domain.

This sequence belongs to the CarB family. In terms of assembly, composed of two chains; the small (or glutamine) chain promotes the hydrolysis of glutamine to ammonia, which is used by the large (or ammonia) chain to synthesize carbamoyl phosphate. Tetramer of heterodimers (alpha,beta)4. Mg(2+) serves as cofactor. Requires Mn(2+) as cofactor.

It catalyses the reaction hydrogencarbonate + L-glutamine + 2 ATP + H2O = carbamoyl phosphate + L-glutamate + 2 ADP + phosphate + 2 H(+). It carries out the reaction hydrogencarbonate + NH4(+) + 2 ATP = carbamoyl phosphate + 2 ADP + phosphate + 2 H(+). It functions in the pathway amino-acid biosynthesis; L-arginine biosynthesis; carbamoyl phosphate from bicarbonate: step 1/1. It participates in pyrimidine metabolism; UMP biosynthesis via de novo pathway; (S)-dihydroorotate from bicarbonate: step 1/3. Its function is as follows. Large subunit of the glutamine-dependent carbamoyl phosphate synthetase (CPSase). CPSase catalyzes the formation of carbamoyl phosphate from the ammonia moiety of glutamine, carbonate, and phosphate donated by ATP, constituting the first step of 2 biosynthetic pathways, one leading to arginine and/or urea and the other to pyrimidine nucleotides. The large subunit (synthetase) binds the substrates ammonia (free or transferred from glutamine from the small subunit), hydrogencarbonate and ATP and carries out an ATP-coupled ligase reaction, activating hydrogencarbonate by forming carboxy phosphate which reacts with ammonia to form carbamoyl phosphate. This chain is Carbamoyl phosphate synthase large chain, found in Bacillus cytotoxicus (strain DSM 22905 / CIP 110041 / 391-98 / NVH 391-98).